The following is a 136-amino-acid chain: Histone H2B.5 (136 aa).

The segment covering 1–36 (MAPKAEKKPAAEKKPVETEKKPKAEKRVPGKDGGAD) has biased composition (basic and acidic residues). Positions 1–44 (MAPKAEKKPAAEKKPVETEKKPKAEKRVPGKDGGADKKKKKAKK) are disordered. 2 positions are modified to N6-acetyllysine: lysine 7 and lysine 26. Residue lysine 132 forms a Glycyl lysine isopeptide (Lys-Gly) (interchain with G-Cter in ubiquitin) linkage.

It belongs to the histone H2B family. As to quaternary structure, the nucleosome is a histone octamer containing two molecules each of H2A, H2B, H3 and H4 assembled in one H3-H4 heterotetramer and two H2A-H2B heterodimers. The octamer wraps approximately 147 bp of DNA. In terms of processing, can be acetylated to form H2BK6ac and H2BK33ac. Post-translationally, monoubiquitinated to form H2BK143ub1; may give a specific tag for epigenetic transcriptional activation.

Its subcellular location is the nucleus. It is found in the chromosome. Core component of nucleosome. Nucleosomes wrap and compact DNA into chromatin, limiting DNA accessibility to the cellular machineries which require DNA as a template. Histones thereby play a central role in transcription regulation, DNA repair, DNA replication and chromosomal stability. DNA accessibility is regulated via a complex set of post-translational modifications of histones, also called histone code, and nucleosome remodeling. The sequence is that of Histone H2B.5 from Triticum aestivum (Wheat).